A 177-amino-acid chain; its full sequence is ATP synthase subunit delta (177 aa).

Belongs to the ATPase delta chain family. In terms of assembly, F-type ATPases have 2 components, F(1) - the catalytic core - and F(0) - the membrane proton channel. F(1) has five subunits: alpha(3), beta(3), gamma(1), delta(1), epsilon(1). F(0) has three main subunits: a(1), b(2) and c(10-14). The alpha and beta chains form an alternating ring which encloses part of the gamma chain. F(1) is attached to F(0) by a central stalk formed by the gamma and epsilon chains, while a peripheral stalk is formed by the delta and b chains.

The protein localises to the cell inner membrane. F(1)F(0) ATP synthase produces ATP from ADP in the presence of a proton or sodium gradient. F-type ATPases consist of two structural domains, F(1) containing the extramembraneous catalytic core and F(0) containing the membrane proton channel, linked together by a central stalk and a peripheral stalk. During catalysis, ATP synthesis in the catalytic domain of F(1) is coupled via a rotary mechanism of the central stalk subunits to proton translocation. Functionally, this protein is part of the stalk that links CF(0) to CF(1). It either transmits conformational changes from CF(0) to CF(1) or is implicated in proton conduction. This chain is ATP synthase subunit delta, found in Pectobacterium atrosepticum (strain SCRI 1043 / ATCC BAA-672) (Erwinia carotovora subsp. atroseptica).